A 74-amino-acid polypeptide reads, in one-letter code: Large ribosomal subunit protein bL27c (74 aa).

Belongs to the bacterial ribosomal protein bL27 family.

The protein resides in the plastid. It is found in the chloroplast. This is Large ribosomal subunit protein bL27c (rpl27) from Calyptrosphaera sphaeroidea.